A 440-amino-acid polypeptide reads, in one-letter code: Transposon Ty1-NL2 Gag polyprotein (440 aa).

Polar residues-rich tracts occupy residues 1-23, 48-60, 71-97, and 129-152; these read MESQQLSQHSPISHGSACASVTS, TKANSQQTTTPAS, SPQTAQSHSPQNGPYPQQCMMTQNQAN, and QFPQYPSSVGTPLSTPSPESGNTF. Disordered stretches follow at residues 1-97, 129-171, and 352-440; these read MESQ…NQAN, QFPQ…YVRP, and GSRN…PETY. The segment covering 153-165 has biased composition (low complexity); it reads TDSSSADSDMTST. The RNA-binding stretch occupies residues 299-401; it reads NNGIHINNKV…NSKSKTARAH (103 aa). Positions 402–418 are enriched in low complexity; that stretch reads NVSTSNNSPSTDNDSIS. Ser416 bears the Phosphoserine mark. Residues 419–428 show a composition bias toward polar residues; the sequence is KSTTEPIQLN. A compositionally biased stretch (basic and acidic residues) spans 429 to 440; sequence NKHDLHLRPETY.

In terms of assembly, homotrimer.

It is found in the cytoplasm. Its function is as follows. Capsid protein (CA) is the structural component of the virus-like particle (VLP), forming the shell that encapsulates the retrotransposons dimeric RNA genome. The particles are assembled from trimer-clustered units and there are holes in the capsid shells that allow for the diffusion of macromolecules. CA also has nucleocapsid-like chaperone activity, promoting primer tRNA(i)-Met annealing to the multipartite primer-binding site (PBS), dimerization of Ty1 RNA and initiation of reverse transcription. The protein is Transposon Ty1-NL2 Gag polyprotein (TY1A-NL2) of Saccharomyces cerevisiae (strain ATCC 204508 / S288c) (Baker's yeast).